The sequence spans 380 residues: MAPNLRKSHPLLKMVNNSLIDLPTPSNISSWWNFGSLLGICLMTQILTGLLLAMHYTADTTLAFSSVAHTCRNVQYGWLIRNLHANGASFFFICIYFHIGRGFYYGSYLYKETWNTGVILLLTLMATAFVGYVLPWGQMSFWGATVITNLFSAIPYIGQTLVEWAWGGFSVDNPTLTRFFALHFLLPFLIAGLTLIHLTFLHESGSNNPLGIVSNCDKIPFHPYFTLKDILGFTLMFLPLTTLALFSPNLLGDPENFTPANPLVTPPHIKPEWYFLFAYAILRSIPNKLGGVLALAASVLILFLIPFLHKAKQRTMTFRPISQLLFWILVANLLILTWVGSQPVEHPFIIIGQLASITYFTILLVLFPIIGALENKMLNY.

Transmembrane regions (helical) follow at residues 34–54 (FGSL…LLAM), 78–99 (WLIR…YFHI), 114–134 (WNTG…GYVL), and 179–199 (FFAL…IHLT). Histidine 84 and histidine 98 together coordinate heme b. Heme b contacts are provided by histidine 183 and histidine 197. Residue histidine 202 participates in a ubiquinone binding. The next 4 helical transmembrane spans lie at 227–247 (LKDI…ALFS), 289–309 (LGGV…PFLH), 321–341 (ISQL…WVGS), and 348–368 (FIII…VLFP).

The protein belongs to the cytochrome b family. In terms of assembly, the cytochrome bc1 complex contains 11 subunits: 3 respiratory subunits (MT-CYB, CYC1 and UQCRFS1), 2 core proteins (UQCRC1 and UQCRC2) and 6 low-molecular weight proteins (UQCRH/QCR6, UQCRB/QCR7, UQCRQ/QCR8, UQCR10/QCR9, UQCR11/QCR10 and a cleavage product of UQCRFS1). This cytochrome bc1 complex then forms a dimer. The cofactor is heme b.

It is found in the mitochondrion inner membrane. Its function is as follows. Component of the ubiquinol-cytochrome c reductase complex (complex III or cytochrome b-c1 complex) that is part of the mitochondrial respiratory chain. The b-c1 complex mediates electron transfer from ubiquinol to cytochrome c. Contributes to the generation of a proton gradient across the mitochondrial membrane that is then used for ATP synthesis. This chain is Cytochrome b (MT-CYB), found in Pachyptila turtur (Fairy prion).